The chain runs to 142 residues: Hemoglobin subunit alpha (142 aa).

At serine 1 the chain carries N-acetylserine. Residues 1–142 form the Globin domain; it reads SLSDKDKADV…LALALGQKYR (142 aa). Histidine 58 is a binding site for O2. Histidine 88 serves as a coordination point for heme b.

It belongs to the globin family. In terms of assembly, heterotetramer of two alpha chains and two beta chains. In terms of tissue distribution, red blood cells.

Involved in oxygen transport from gills to the various peripheral tissues. The sequence is that of Hemoglobin subunit alpha (hba) from Catostomus clarkii (Desert sucker).